A 335-amino-acid polypeptide reads, in one-letter code: RNA polymerase sigma factor RpoS (335 aa).

A sigma-70 factor domain-1 region spans residues 57–90 (DATQMYLSEIGFSPLLTAEEEVLYARRALRGDEA). The tract at residues 95-165 (MIESNLRLVV…ERALMNQTRT (71 aa)) is sigma-70 factor domain-2. An Interaction with polymerase core subunit RpoC motif is present at residues 119 to 122 (DLIE). The tract at residues 175-250 (ELNIYLRTAR…DSHNADPEFS (76 aa)) is sigma-70 factor domain-3. Residues 263-316 (WLDELNPKQKEVLARRFGLLGYEPSTLEEVGREINLTRERVRQIQVEGLRRLRE) form a sigma-70 factor domain-4 region. Residues 289–308 (LEEVGREINLTRERVRQIQV) constitute a DNA-binding region (H-T-H motif).

This sequence belongs to the sigma-70 factor family. RpoS subfamily. As to quaternary structure, interacts with the RNA polymerase core enzyme.

The protein localises to the cytoplasm. Sigma factors are initiation factors that promote the attachment of RNA polymerase to specific initiation sites and are then released. This sigma factor is the master transcriptional regulator of the stationary phase and the general stress response. May be required for the persistence of V.cholerae in aquatic habitats. This is RNA polymerase sigma factor RpoS from Vibrio cholerae serotype O1 (strain ATCC 39315 / El Tor Inaba N16961).